A 1515-amino-acid chain; its full sequence is MLCVAGAKLKRELDATATVLANRQDESEQSRKRLIEQSREFKKNTPEDLRKQVAPLLKSFQGEIDALSKRSKEAEAAFLTVYKRLIDVPDPVPALDVGQQLEIKVQRLHDIETENQKLRETLEEYNKEFAEVKNQEVTIKALKEKIREYEQTLKSQAETIALEKEQKLQNDFAEKERKLQETQMSTTSKLEEAEHKLQTLQTALEKTRTELFDLKTKYDEETTAKADEIEMIMTDLERANQRAEVAQREAETLREQLSSANHSLQLASQIQKAPDVAIEVLTRSSLEVELAAKEREIAQLVEDVQRLQASLTKLRENSASQISQLEQQLNAKNSTLKQLEEKLKGQADYEEVKKELNTLKSMEFAPSEGAGTQDSTKPLEVLLLEKNRSLQSENATLRISNSDLSGSARRKGRDQPESRRPGPLPASPPPQLPRNTGEQVSNTNGTHHFSPAGLSQDFFSSNLASPSLPLASTGKFALNSLLQRQLMQSFYSKAMQEAGSTSTIFSTGPYSTNSISSPSPLQQSPDVNGMAPSPSQSESAGSISEGEEIDTAEIARQVKEQLIKHNIGQRIFGHYVLGLSQGSVSEILARPKPWNKLTVRGKEPFHKMKQFLSDEQNILALRSIQGRQRENPGQSLNRLFQEVPKRRNRSEGNITTRIRASETGSDEAIKSILEQAKRELQVQKTAEPVQTSSTSSSGNSDDAIRSILQQARREMEAQQAALDPALKPAPLSQPDLTILTPKHLSASPMSTVSTYPPLAISLKKTPAAPETSTAALPSAPALKKEAQDVPTLDPPGSADAAQGVLRPMKSELVRGSTWKDPWWSPIQPERRNLTSSEETKADETTASGKERAGSSQPRAERSQLQGPSASAEYWKEWPSAESPYSQSSELSLTGASRSETPQNSPLPSSPIVPMAKPAKPSVPPLTPEQYEVYMYQEVDTIELTRQVKEKLAKNGICQRIFGEKVLGLSQGSVSDMLSRPKPWSKLTQKGREPFIRMQLWLNGELGQGVLPVQGQQQGPVLHSVASLQDPLQQGCVSSESTPKTSASCSPAPESPMSSSESVKSLTELVQQPCPAIETSKEGKPPEPSDPPASDSQPTTPLPLSGHSALSIQELVAMSPELDTYGITKRVKEVLTDNNLGQRLFGETILGLTQGSVSDLLARPKPWHKLSLKGREPFVRMQLWLNDPNNVEKLMDMKRMEKKAYMKRRHSSVSDSQPCEPPSVGIDYSQGASPQPQHQLKKPRVVLAPEEKEALKRAYQQKPYPSPKTIEELATQLNLKTSTVINWFHNYRSRIRRELFIEEIQAGSQGQAGASDSPSARSSRAAPSSEGDSCDGVEATDAEEPGGNIVATKSQGGLAEVAAAPADREEATQPAEKAKAQPLCSGTPGQDDGEDASRPRPLPEGLADAPAPVPSLAAPAAGEDAATSATAPATATEAPGAARAGPAERSSALPSTSAPANAPARRPSSLQSLFGLPEAAGARDNPVRKKKAANLNSIIHRLEKAASREEPIEWEF.

Residues 56–361 (LLKSFQGEID…VKKELNTLKS (306 aa)) adopt a coiled-coil conformation. Residues 393–405 (ENATLRISNSDLS) are compositionally biased toward polar residues. 4 disordered regions span residues 393–453 (ENAT…SPAG), 509–546 (PYST…ISEG), 644–666 (PKRR…TGSD), and 680–702 (LQVQ…NSDD). Residues 422 to 432 (GPLPASPPPQL) show a composition bias toward pro residues. At S427 the chain carries Phosphoserine. Residues 436 to 447 (TGEQVSNTNGTH) are compositionally biased toward polar residues. Residues 514 to 544 (SISSPSPLQQSPDVNGMAPSPSQSESAGSIS) are compositionally biased toward low complexity. Residues 540 to 627 (AGSISEGEEI…ILALRSIQGR (88 aa)) constitute a DNA-binding region (CUT 1). S761 carries the post-translational modification Phosphoserine. Disordered stretches follow at residues 769-871 (PETS…SASA) and 884-923 (YSQS…PSVP). Glycyl lysine isopeptide (Lys-Gly) (interchain with G-Cter in SUMO2) cross-links involve residues K783, K809, and K840. Positions 828-852 (PERRNLTSSEETKADETTASGKERA) are enriched in basic and acidic residues. Polar residues-rich tracts occupy residues 853–868 (GSSQ…QGPS) and 884–906 (YSQS…NSPL). Position 904 is a phosphoserine (S904). Positions 929-1016 (QYEVYMYQEV…QGVLPVQGQQ (88 aa)) form a DNA-binding region, CUT 2. The segment covering 1032–1044 (QQGCVSSESTPKT) has biased composition (polar residues). Positions 1032 to 1105 (QQGCVSSEST…QPTTPLPLSG (74 aa)) are disordered. The span at 1045–1061 (SASCSPAPESPMSSSES) shows a compositional bias: low complexity. A phosphoserine mark is found at S1054 and S1064. A DNA-binding region (CUT 3) is located at residues 1112–1199 (QELVAMSPEL…VEKLMDMKRM (88 aa)). The disordered stretch occupies residues 1207 to 1242 (RRHSSVSDSQPCEPPSVGIDYSQGASPQPQHQLKKP). Residues 1239–1298 (LKKPRVVLAPEEKEALKRAYQQKPYPSPKTIEELATQLNLKTSTVINWFHNYRSRIRREL) constitute a DNA-binding region (homeobox). The residue at position 1265 (S1265) is a Phosphoserine. K1279 participates in a covalent cross-link: Glycyl lysine isopeptide (Lys-Gly) (interchain with G-Cter in SUMO2). The interval 1307–1488 (SQGQAGASDS…AGARDNPVRK (182 aa)) is disordered. Over residues 1313–1328 (ASDSPSARSSRAAPSS) the composition is skewed to low complexity. Residues 1331 to 1343 (DSCDGVEATDAEE) are compositionally biased toward acidic residues. S1332 is subject to Phosphoserine. The segment covering 1365–1378 (ADREEATQPAEKAK) has biased composition (basic and acidic residues). The span at 1406 to 1468 (ADAPAPVPSL…ANAPARRPSS (63 aa)) shows a compositional bias: low complexity. Phosphoserine occurs at positions 1468, 1496, and 1506.

This sequence belongs to the CUT homeobox family. As to quaternary structure, interacts with BANP. Interacts with SATB1 (via DNA-binding domains); the interaction inhibits the attachment of both proteins to DNA. Post-translationally, phosphorylated by PKA. In terms of processing, as cells progress into S phase, a fraction of CUX1 molecules is proteolytically processed into N-terminally truncated proteins of 110 kDa by CTSL. Cell cycle-dependent processing of CUX1 serves to generate a CDP/Cux p110 with distinct DNA binding and transcriptional properties. In terms of tissue distribution, testis-specific where it is expressed in germ cells.

It localises to the nucleus. In terms of biological role, transcription factor involved in the control of neuronal differentiation in the brain. Regulates dendrite development and branching, and dendritic spine formation in cortical layers II-III. Also involved in the control of synaptogenesis. In addition, it has probably a broad role in mammalian development as a repressor of developmentally regulated gene expression. May act by preventing binding of positively-activing CCAAT factors to promoters. Component of nf-munr repressor; binds to the matrix attachment regions (MARs) (5' and 3') of the immunoglobulin heavy chain enhancer. Represses T-cell receptor (TCR) beta enhancer function by binding to MARbeta, an ATC-rich DNA sequence located upstream of the TCR beta enhancer. Binds to the TH enhancer; may require the basic helix-loop-helix protein TCF4 as a coactivator. Its function is as follows. Plays a role in cell cycle progression, in particular at the G1/S transition. As cells progress into S phase, a fraction of CUX1 molecules is proteolytically processed into N-terminally truncated proteins of 110 kDa. While CUX1 only transiently binds to DNA and carries the CCAAT-displacement activity, CDP/Cux p110 makes a stable interaction with DNA and stimulates expression of genes such as POLA1. The sequence is that of Homeobox protein cut-like 1 from Mus musculus (Mouse).